A 99-amino-acid polypeptide reads, in one-letter code: NADH-ubiquinone oxidoreductase chain 4L (99 aa).

The next 3 membrane-spanning stretches (helical) occupy residues 5-25 (IITAYKIGTILFLIGILGFII), 30-50 (ILLLIISIEMTLLAISFIIIC), and 65-85 (LYILALAGSEAAIGLSLLVLF).

This sequence belongs to the complex I subunit 4L family.

It localises to the mitochondrion membrane. It catalyses the reaction a ubiquinone + NADH + 5 H(+)(in) = a ubiquinol + NAD(+) + 4 H(+)(out). Its function is as follows. Core subunit of the mitochondrial membrane respiratory chain NADH dehydrogenase (Complex I) that is believed to belong to the minimal assembly required for catalysis. Complex I functions in the transfer of electrons from NADH to the respiratory chain. The immediate electron acceptor for the enzyme is believed to be ubiquinone. This Allomyces macrogynus protein is NADH-ubiquinone oxidoreductase chain 4L (ND4L).